We begin with the raw amino-acid sequence, 516 residues long: Cytochrome P450 93G1 (516 aa).

A helical transmembrane segment spans residues 11 to 31; the sequence is LLGMGTTMGALALALVVVVVV. Cys-454 serves as a coordination point for heme.

It belongs to the cytochrome P450 family. Requires heme as cofactor.

Its subcellular location is the membrane. The enzyme catalyses a flavanone + reduced [NADPH--hemoprotein reductase] + O2 = a flavone + oxidized [NADPH--hemoprotein reductase] + 2 H2O + H(+). It participates in secondary metabolite biosynthesis; flavonoid biosynthesis. Its function is as follows. Functions as a flavone synthase II (FNSII) that catalyzes the direct conversion of flavanones to flavones. In vitro, can convert naringenin and eriodictyol to apigenin and luteolin, respectively. Acts as a key branch point enzyme that channels flavanones to the biosynthesis of soluble tricin O-linked conjugates. The chain is Cytochrome P450 93G1 from Oryza sativa subsp. japonica (Rice).